Here is a 514-residue protein sequence, read N- to C-terminus: Multifunctional alkaline phosphatase superfamily protein pRL90232 (514 aa).

The Mn(2+) site is built by Asp-12, Cys-57, Asp-324, and His-325. The active-site Nucleophile is Cys-57. A 3-oxoalanine (Cys) modification is found at Cys-57.

It belongs to the alkaline phosphatase superfamily. In terms of assembly, homotetramer. It depends on Mn(2+) as a cofactor. Post-translationally, the conversion to 3-oxoalanine (also known as C-formylglycine, FGly), of a serine or cysteine residue in prokaryotes and of a cysteine residue in eukaryotes, is critical for catalytic activity.

Functionally, hydrolytic enzyme with a broad substrate specificity acting on phosphate diesters and phosphonate monoesters. The chain is Multifunctional alkaline phosphatase superfamily protein pRL90232 from Rhizobium johnstonii (strain DSM 114642 / LMG 32736 / 3841) (Rhizobium leguminosarum bv. viciae).